We begin with the raw amino-acid sequence, 160 residues long: ATP synthase subunit delta, mitochondrial (160 aa).

Residues 1-22 constitute a mitochondrion transit peptide; it reads MLRSIIGKSASRSLNFVAKRSY.

The protein belongs to the ATPase epsilon chain family. F-type ATPases have 2 components, CF(1) - the catalytic core - and CF(0) - the membrane proton channel. CF(1) has five subunits: alpha(3), beta(3), gamma(1), delta(1), epsilon(1). CF(0) has three main subunits: a, b and c.

It localises to the mitochondrion. The protein resides in the mitochondrion inner membrane. Its function is as follows. Mitochondrial membrane ATP synthase (F(1)F(0) ATP synthase or Complex V) produces ATP from ADP in the presence of a proton gradient across the membrane which is generated by electron transport complexes of the respiratory chain. F-type ATPases consist of two structural domains, F(1) - containing the extramembraneous catalytic core, and F(0) - containing the membrane proton channel, linked together by a central stalk and a peripheral stalk. During catalysis, ATP turnover in the catalytic domain of F(1) is coupled via a rotary mechanism of the central stalk subunits to proton translocation. Part of the complex F(1) domain and of the central stalk which is part of the complex rotary element. Rotation of the central stalk against the surrounding alpha(3)beta(3) subunits leads to hydrolysis of ATP in three separate catalytic sites on the beta subunits. The protein is ATP synthase subunit delta, mitochondrial (ATP16) of Saccharomyces cerevisiae (strain ATCC 204508 / S288c) (Baker's yeast).